A 297-amino-acid polypeptide reads, in one-letter code: Small ribosomal subunit protein uS9m (297 aa).

The tract at residues 278–297 (VERKKPGKRKARKMPTWVKR) is disordered.

The protein belongs to the universal ribosomal protein uS9 family.

The protein localises to the mitochondrion. This chain is Small ribosomal subunit protein uS9m (MRPS9), found in Kluyveromyces lactis (strain ATCC 8585 / CBS 2359 / DSM 70799 / NBRC 1267 / NRRL Y-1140 / WM37) (Yeast).